We begin with the raw amino-acid sequence, 301 residues long: Asialoglycoprotein receptor 2 (301 aa).

Residues Met-1–Gln-43 are disordered. The Cytoplasmic segment spans residues Met-1 to Arg-58. Ser-13 bears the Phosphoserine mark. Positions Asn-16–His-39 are enriched in basic and acidic residues. Cys-54 carries the S-palmitoyl cysteine lipid modification. Residues Leu-59 to Ser-79 traverse the membrane as a helical; Signal-anchor for type II membrane protein segment. Over Gln-80–His-301 the chain is Extracellular. 2 N-linked (GlcNAc...) asparagine glycosylation sites follow: Asn-97 and Asn-165. The C-type lectin domain maps to Cys-169–Lys-295. Intrachain disulfides connect Cys-170–Cys-181, Cys-198–Cys-293, and Cys-271–Cys-285. N-linked (GlcNAc...) asparagine glycosylation occurs at Asn-298.

As to quaternary structure, interacts with LASS2. Expressed exclusively in hepatic parenchymal cells.

The protein resides in the membrane. Mediates the endocytosis of plasma glycoproteins to which the terminal sialic acid residue on their complex carbohydrate moieties has been removed. The receptor recognizes terminal galactose and N-acetylgalactosamine units. After ligand binding to the receptor, the resulting complex is internalized and transported to a sorting organelle, where receptor and ligand are disassociated. The receptor then returns to the cell membrane surface. This chain is Asialoglycoprotein receptor 2 (Asgr2), found in Mus musculus (Mouse).